The sequence spans 290 residues: Nucleoid occlusion protein (290 aa).

Positions 153–172 (EALAQRLGKGQSTIANKLRL) form a DNA-binding region, H-T-H motif.

Belongs to the ParB family.

Its subcellular location is the cytoplasm. The protein resides in the nucleoid. In terms of biological role, effects nucleoid occlusion by binding relatively nonspecifically to DNA and preventing the assembly of the division machinery in the vicinity of the nucleoid, especially under conditions that disturb the cell cycle. It helps to coordinate cell division and chromosome segregation by preventing the formation of the Z ring through the nucleoid, which would cause chromosome breakage. This chain is Nucleoid occlusion protein, found in Bacillus cereus (strain G9842).